The following is a 223-amino-acid chain: UPF0441 protein YgiB (223 aa).

Over residues 178–195 (TVPKTAMAPKPATTTTVT) the composition is skewed to low complexity. The segment at 178–223 (TVPKTAMAPKPATTTTVTRGGFGESVAKQSTMQRSATGTSSRSMGG) is disordered. Over residues 204–223 (AKQSTMQRSATGTSSRSMGG) the composition is skewed to polar residues.

It belongs to the UPF0441 family.

The chain is UPF0441 protein YgiB from Shigella flexneri serotype 5b (strain 8401).